The primary structure comprises 228 residues: Peptide deformylase (228 aa).

Disordered regions lie at residues 1–28 (MSQDRRYTGCNTHSNTHSAQDREKEGAV) and 116–138 (GVPKRQTNKQQANNSTSCDEPDR). Composition is skewed to polar residues over residues 8–18 (TGCNTHSNTHS) and 123–133 (NKQQANNSTSC). Cys-141 and His-183 together coordinate Fe cation. Glu-184 is an active-site residue. His-187 contacts Fe cation.

This sequence belongs to the polypeptide deformylase family. Requires Fe(2+) as cofactor.

The enzyme catalyses N-terminal N-formyl-L-methionyl-[peptide] + H2O = N-terminal L-methionyl-[peptide] + formate. Its function is as follows. Removes the formyl group from the N-terminal Met of newly synthesized proteins. Requires at least a dipeptide for an efficient rate of reaction. N-terminal L-methionine is a prerequisite for activity but the enzyme has broad specificity at other positions. This chain is Peptide deformylase, found in Tropheryma whipplei (strain Twist) (Whipple's bacillus).